The following is a 132-amino-acid chain: Cell division protein FtsL (132 aa).

Topologically, residues 1–50 (MAELKKMRHNHYDVPVMDEPVIASQIKKTNQKKESFQLPQKKLNKISVFE) are cytoplasmic. Residues 51–71 (KILCILLLCSIVGIVVITIQI) form a helical membrane-spanning segment. At 72–132 (RTTISETMNN…EIDGNLRKVK (61 aa)) the chain is on the extracellular side.

Belongs to the FtsL family.

It localises to the cell membrane. Essential cell division protein. This Melissococcus plutonius (strain ATCC 35311 / DSM 29964 / CIP 104052 / LMG 20360 / NCIMB 702443) protein is Cell division protein FtsL.